The sequence spans 594 residues: Shugoshin (594 aa).

Residues 38–61 (KITDMETKVSELVQENVSLRSRLS) adopt a coiled-coil conformation. Disordered regions lie at residues 104–178 (SGIH…KSSR), 201–266 (QLPI…TNKN), 342–380 (SKIK…RRTR), and 519–549 (TKQQ…RTKQ). Residues 220–240 (EEESQENKHTKEEREDEGKEN) are a coiled coil. Over residues 224 to 239 (QENKHTKEEREDEGKE) the composition is skewed to basic and acidic residues. The span at 252–261 (SVTNTGTECS) shows a compositional bias: polar residues. Residues 343 to 355 (KIKHSMKHPRTKL) show a composition bias toward basic residues. Residues 357 to 376 (GGQDDIMPHTDYDKDDEKRE) are compositionally biased toward basic and acidic residues. Composition is skewed to polar residues over residues 519–532 (TKQQ…SDPN) and 539–549 (NSNVKPTRTKQ).

Belongs to the shugoshin family.

It localises to the nucleus. Its subcellular location is the chromosome. The protein resides in the centromere. In terms of biological role, plays a central role in chromosome cohesion during cell division by preventing premature dissociation of cohesin complex from centromeres after prophase, when most of cohesin complex dissociates from chromosomes arms. This chain is Shugoshin (SGO1), found in Kluyveromyces lactis (strain ATCC 8585 / CBS 2359 / DSM 70799 / NBRC 1267 / NRRL Y-1140 / WM37) (Yeast).